The sequence spans 160 residues: Anaerobic nitrite reductase Glb1-1 (160 aa).

The Globin domain maps to 8-157 (GFTEEQEALV…LVNAIKSEMK (150 aa)). The short motif at 41–45 (EIAPS) is the Homodimerization element. Heme b-binding residues include Ser-51, Lys-65, His-69, Lys-99, and His-104. The Homodimerization motif lies at 111–123 (DEHFEVTKFALLE).

It belongs to the plant globin family. Homodimer. Requires heme b as cofactor.

The enzyme catalyses Fe(III)-heme b-[protein] + nitric oxide + H2O = Fe(II)-heme b-[protein] + nitrite + 2 H(+). Functionally, phytoglobin that reduces nitrite to nitric oxide (NO) under anoxic conditions (e.g. during flooding or in waterlogged soil) and upon root nodulation. Required for general plant development and during nodulation, especially for the onset of symbiosis. Monitors nitric oxide (NO) levels during early phase of the nitrogen-fixing symbiosis and buffers oxygen in functioning nodules. May not function as an oxygen storage or transport protein. Has an unusually high affinity for O(2) through a hexacoordinate heme iron because of a very low dissociation constant. The chain is Anaerobic nitrite reductase Glb1-1 from Medicago truncatula (Barrel medic).